A 213-amino-acid chain; its full sequence is Ras-like protein rasX (213 aa).

16 to 23 (GDGGVGKT) contacts GTP. An Effector region motif is present at residues 38–46 (YDPTIEDSY). GTP is bound by residues 63–67 (DTAGQ) and 122–125 (NKSD). Cysteine 210 carries the cysteine methyl ester modification. Cysteine 210 carries the S-geranylgeranyl cysteine lipid modification. The propeptide at 211-213 (KMM) is removed in mature form.

The protein belongs to the small GTPase superfamily. Ras family.

The protein resides in the cell membrane. It carries out the reaction GTP + H2O = GDP + phosphate + H(+). In terms of biological role, ras proteins bind GDP/GTP and possess intrinsic GTPase activity. The sequence is that of Ras-like protein rasX (rasX) from Dictyostelium discoideum (Social amoeba).